The sequence spans 1070 residues: Phosphatidylinositol 4,5-bisphosphate 3-kinase catalytic subunit beta isoform (1070 aa).

A PI3K-ABD domain is found at 26-115 (SDGSIPVDFL…LPVLKLVTRS (90 aa)). The region spanning 194-285 (GGKLIVAVHF…RALPHFILVE (92 aa)) is the PI3K-RBD domain. S324 carries the post-translational modification Phosphoserine. A C2 PI3K-type domain is found at 327–496 (WENNNPFQIV…NATALHVKFP (170 aa)). The short motif at 410–418 (KVKTKKSTK) is the Nuclear localization signal element. In terms of domain architecture, PIK helical spans 524–701 (ANVSSRGGKK…GVILEAYCRG (178 aa)). In terms of domain architecture, PI3K/PI4K catalytic spans 772–1053 (YVEKCKYMDS…KFDEALRESW (282 aa)). The tract at residues 778–784 (YMDSKMK) is G-loop. A catalytic loop region spans residues 916-924 (GIGDRHSDN). The activation loop stretch occupies residues 935–961 (HIDFGHILGNFKSKFGIKRERVPFILT). S1070 is modified (phosphoserine; by autocatalysis).

This sequence belongs to the PI3/PI4-kinase family. As to quaternary structure, heterodimer of a catalytic subunit PIK3CB and a p85 regulatory subunit (PIK3R1, PIK3R2 or PIK3R3). Interaction with PIK3R2 is required for nuclear localization and nuclear export. Part of a complex with PIK3R1 and PTEN. Binding to PTEN may antagonize the lipid kinase activity under normal growth conditions. Part of a complex involved in autophagosome formation composed of PIK3C3 and PIK3R4. Interacts with BECN1, ATG14 and RAB5A. Post-translationally, autophosphorylation at Ser-1070 negatively regulates the phosphatidylinositol-4,5-bisphosphate 3-kinase activity. In terms of tissue distribution, expressed ubiquitously.

Its subcellular location is the cytoplasm. It is found in the nucleus. The enzyme catalyses a 1,2-diacyl-sn-glycero-3-phospho-(1D-myo-inositol-4,5-bisphosphate) + ATP = a 1,2-diacyl-sn-glycero-3-phospho-(1D-myo-inositol-3,4,5-trisphosphate) + ADP + H(+). It catalyses the reaction 1-octadecanoyl-2-(5Z,8Z,11Z,14Z)-eicosatetraenoyl-sn-glycero-3-phospho-1D-myo-inositol 4,5-bisphosphate + ATP = 1-octadecanoyl-2-(5Z,8Z,11Z,14Z-eicosatetraenoyl)-sn-glycero-3-phospho-(1D-myo-inositol 3,4,5-triphosphate) + ADP + H(+). The catalysed reaction is L-seryl-[protein] + ATP = O-phospho-L-seryl-[protein] + ADP + H(+). Its pathway is phospholipid metabolism; phosphatidylinositol phosphate biosynthesis. In terms of biological role, phosphoinositide-3-kinase (PI3K) phosphorylates phosphatidylinositol derivatives at position 3 of the inositol ring to produce 3-phosphoinositides. Uses ATP and PtdIns(4,5)P2 (phosphatidylinositol 4,5-bisphosphate) to generate phosphatidylinositol 3,4,5-trisphosphate (PIP3). PIP3 plays a key role by recruiting PH domain-containing proteins to the membrane, including AKT1 and PDPK1, activating signaling cascades involved in cell growth, survival, proliferation, motility and morphology. Involved in the activation of AKT1 upon stimulation by G-protein coupled receptors (GPCRs) ligands such as CXCL12, sphingosine 1-phosphate, and lysophosphatidic acid. May also act downstream receptor tyrosine kinases. Required in different signaling pathways for stable platelet adhesion and aggregation. Plays a role in platelet activation signaling triggered by GPCRs, alpha-IIb/beta-3 integrins (ITGA2B/ ITGB3) and ITAM (immunoreceptor tyrosine-based activation motif)-bearing receptors such as GP6. Regulates the strength of adhesion of ITGA2B/ ITGB3 activated receptors necessary for the cellular transmission of contractile forces. Required for platelet aggregation induced by F2 (thrombin) and thromboxane A2 (TXA2). Has a role in cell survival. May have a role in cell migration. Involved in the early stage of autophagosome formation. Modulates the intracellular level of PtdIns3P (phosphatidylinositol 3-phosphate) and activates PIK3C3 kinase activity. May act as a scaffold, independently of its lipid kinase activity to positively regulate autophagy. May have a role in insulin signaling as scaffolding protein in which the lipid kinase activity is not required. May have a kinase-independent function in regulating cell proliferation and in clathrin-mediated endocytosis. Mediator of oncogenic signal in cell lines lacking PTEN. The lipid kinase activity is necessary for its role in oncogenic transformation. Required for the growth of ERBB2 and RAS driven tumors. Also has a protein kinase activity showing autophosphorylation. This is Phosphatidylinositol 4,5-bisphosphate 3-kinase catalytic subunit beta isoform (PIK3CB) from Homo sapiens (Human).